Here is a 72-residue protein sequence, read N- to C-terminus: Conotoxin Ep11.1 (72 aa).

The N-terminal stretch at 1–19 (MKLCVTFLLILVILPSVTG) is a signal peptide. The propeptide occupies 20–32 (EKSSKRTLSGAAL). Cystine bridges form between Cys39/Cys53, Cys46/Cys58, Cys52/Cys63, and Cys57/Cys70.

It belongs to the conotoxin I1 superfamily. In terms of tissue distribution, expressed by the venom duct.

Its subcellular location is the secreted. In Conus episcopatus (Bishop's cone), this protein is Conotoxin Ep11.1.